The following is a 160-amino-acid chain: Epithelial membrane protein 1 (160 aa).

Residues Met-1–Val-21 form a helical membrane-spanning segment. 2 N-linked (GlcNAc...) asparagine glycosylation sites follow: Asn-35 and Asn-43. 3 consecutive transmembrane segments (helical) span residues Phe-67–Phe-87, Phe-95–Ile-115, and Phe-137–Leu-157.

Belongs to the PMP-22/EMP/MP20 family. In terms of tissue distribution, most abundant in squamous epithelia.

It is found in the membrane. In Oryctolagus cuniculus (Rabbit), this protein is Epithelial membrane protein 1 (EMP1).